The following is a 472-amino-acid chain: Adenosylhomocysteinase (472 aa).

Positions 61, 136, and 196 each coordinate substrate. Residue 197–199 (TTT) participates in NAD(+) binding. Lysine 226 and aspartate 230 together coordinate substrate. Residues asparagine 231, 260–265 (GYGDVG), glutamate 283, asparagine 318, 339–341 (IGH), and asparagine 384 contribute to the NAD(+) site.

The protein belongs to the adenosylhomocysteinase family. It depends on NAD(+) as a cofactor.

The protein resides in the cytoplasm. It carries out the reaction S-adenosyl-L-homocysteine + H2O = L-homocysteine + adenosine. It participates in amino-acid biosynthesis; L-homocysteine biosynthesis; L-homocysteine from S-adenosyl-L-homocysteine: step 1/1. Functionally, may play a key role in the regulation of the intracellular concentration of adenosylhomocysteine. The sequence is that of Adenosylhomocysteinase from Cupriavidus pinatubonensis (strain JMP 134 / LMG 1197) (Cupriavidus necator (strain JMP 134)).